The primary structure comprises 341 residues: L-threonine 3-dehydrogenase (341 aa).

Cysteine 38 is a binding site for Zn(2+). Residues threonine 40 and histidine 43 each act as charge relay system in the active site. The Zn(2+) site is built by histidine 63, glutamate 64, cysteine 93, cysteine 96, cysteine 99, and cysteine 107. Residues isoleucine 175, aspartate 195, arginine 200, 262-264, and 286-287 contribute to the NAD(+) site; these read LGI and IY.

The protein belongs to the zinc-containing alcohol dehydrogenase family. Homotetramer. Zn(2+) serves as cofactor.

The protein localises to the cytoplasm. It carries out the reaction L-threonine + NAD(+) = (2S)-2-amino-3-oxobutanoate + NADH + H(+). Its pathway is amino-acid degradation; L-threonine degradation via oxydo-reductase pathway; glycine from L-threonine: step 1/2. Its function is as follows. Catalyzes the NAD(+)-dependent oxidation of L-threonine to 2-amino-3-ketobutyrate. The chain is L-threonine 3-dehydrogenase from Edwardsiella ictaluri (strain 93-146).